The primary structure comprises 127 residues: Large ribosomal subunit protein bL17 (127 aa).

The protein belongs to the bacterial ribosomal protein bL17 family. As to quaternary structure, part of the 50S ribosomal subunit. Contacts protein L32.

In Levilactobacillus brevis (strain ATCC 367 / BCRC 12310 / CIP 105137 / JCM 1170 / LMG 11437 / NCIMB 947 / NCTC 947) (Lactobacillus brevis), this protein is Large ribosomal subunit protein bL17.